A 329-amino-acid chain; its full sequence is Anthranilate phosphoribosyltransferase (329 aa).

Residues glycine 78, 81–82 (GD), threonine 86, 88–91 (NLST), 106–114 (KHGNRSASG), and serine 118 contribute to the 5-phospho-alpha-D-ribose 1-diphosphate site. Glycine 78 lines the anthranilate pocket. A Mg(2+)-binding site is contributed by serine 90. Position 109 (asparagine 109) interacts with anthranilate. Arginine 164 provides a ligand contact to anthranilate. Aspartate 221 and glutamate 222 together coordinate Mg(2+).

It belongs to the anthranilate phosphoribosyltransferase family. In terms of assembly, homodimer. Requires Mg(2+) as cofactor.

It carries out the reaction N-(5-phospho-beta-D-ribosyl)anthranilate + diphosphate = 5-phospho-alpha-D-ribose 1-diphosphate + anthranilate. It participates in amino-acid biosynthesis; L-tryptophan biosynthesis; L-tryptophan from chorismate: step 2/5. Its function is as follows. Catalyzes the transfer of the phosphoribosyl group of 5-phosphorylribose-1-pyrophosphate (PRPP) to anthranilate to yield N-(5'-phosphoribosyl)-anthranilate (PRA). This Pyrobaculum islandicum (strain DSM 4184 / JCM 9189 / GEO3) protein is Anthranilate phosphoribosyltransferase.